Consider the following 936-residue polypeptide: Protein NNF2 (936 aa).

The Lumenal segment spans residues 1-41; that stretch reads MEEQFTNQKKVSHLQSLMNTKRSEQPTEFAKKHRFKDTLAL. Residue Lys10 forms a Glycyl lysine isopeptide (Lys-Gly) (interchain with G-Cter in ubiquitin) linkage. The chain crosses the membrane as a helical span at residues 42–62; that stretch reads FLVFLSFNHFTSLCLLVSFIV. Topologically, residues 63 to 120 are cytoplasmic; it reads ATKCKDFLANCFIILFLSKKPSRHIGEVAHIDISTSKVTNGSSNRKSNSRFFGNSKNS. Residues 121–141 form a helical membrane-spanning segment; that stretch reads FVIPIPVLICEILFAMLLKIY. Topologically, residues 142 to 245 are lumenal; the sequence is GGDYFVKPIK…FKMLGKHSDS (104 aa). The helical transmembrane segment at 246 to 266 threads the bilayer; it reads MIYYLSFHILFFSFASSLLHP. Topologically, residues 267–936 are cytoplasmic; the sequence is HRQTAENKPL…NIHSLIGNSY (670 aa). Disordered regions lie at residues 297–351, 387–437, and 512–533; these read RISS…SNIL, GSNS…DFFS, and TSEN…QEKH. A compositionally biased stretch (low complexity) spans 299 to 308; the sequence is SSSSSVSADS. The segment covering 325–351 has biased composition (polar residues); that stretch reads LSSSNQTIHPSQQNNSPVPLSSHSNIL. Low complexity-rich tracts occupy residues 394 to 405 and 414 to 428; these read TTTTSTTTSPTT and SLSN…SNGN. The span at 512 to 529 shows a compositional bias: polar residues; it reads TSENSLTPTNSNTSYVSN.

The protein localises to the endoplasmic reticulum membrane. The protein is Protein NNF2 (NNF2) of Saccharomyces cerevisiae (strain ATCC 204508 / S288c) (Baker's yeast).